Reading from the N-terminus, the 596-residue chain is Signal peptide peptidase-like 2B (596 aa).

Residues 1–21 (MAARWAQFLLFSLLSLPQVYC) form the signal peptide. Residues 22–170 (EYGMVHVLSE…APNEPVLDYN (149 aa)) are Lumenal-facing. Residues 53-147 (HDLGKASLLQ…LLSYSDMLDI (95 aa)) form the PA domain. Asn93 carries an N-linked (GlcNAc...) asparagine glycan. Residues 171–191 (MVIIFVMAVGTVAIGGYWAGS) form a helical membrane-spanning segment. Over 192–219 (RDVKERYMKHKRDDGAEKHEDETVDVTP) the chain is Cytoplasmic. A helical membrane pass occupies residues 220–240 (IMICVFVVMCCSMLVLLYFFY). The Lumenal portion of the chain corresponds to 241-242 (DH). The helical transmembrane segment at 243–263 (LVYVIIGIFCLAASIGLYSCL) threads the bilayer. Residues 264 to 289 (SPFVRRFPLGKCRIPDNNLPYFHKRP) lie on the Cytoplasmic side of the membrane. Residues 290-310 (QVRILLLAVFCISVSVVWGVF) traverse the membrane as a helical segment. Topologically, residues 311–315 (RNEDQ) are lumenal. A helical membrane pass occupies residues 316–336 (WAWVLQDALGIAFCLYMLKTI). At 337 to 344 (RLPTFKGC) the chain is on the cytoplasmic side. The chain crosses the membrane as a helical span at residues 345-365 (TLLLLVLFVYDVFFVFITPFL). The active site involves Asp355. Over 366 to 408 (TKTGESIMVEVAAGPSDSATHEKLPMVLKVPRLNSSPLALCDR) the chain is Lumenal. The chain crosses the membrane as a helical span at residues 409–429 (PFSLLGFGDILVPGLLVAYCH). Residue Asp417 is part of the active site. Residues 430-441 (RFDIQVQSSRVY) are Cytoplasmic-facing. Residues 442–462 (FVACTIAYGIGLLVTFVALAL) form a helical membrane-spanning segment. At 463–466 (MQMG) the chain is on the lumenal side. A helical membrane pass occupies residues 467-487 (QPALLYLVPCTLITSFSVALW). Positions 468 to 470 (PAL) match the PAL motif. The Cytoplasmic segment spans residues 488–596 (RKELAMFWTG…SLNLEQKQLE (109 aa)). The tract at residues 543-596 (KELHSPTLAAEEPADNDTKTEQSEVSIAQSEEAAGHNKDDLESKSLNLEQKQLE) is disordered. Residues 575–585 (AAGHNKDDLES) are compositionally biased toward basic and acidic residues. Positions 586–596 (KSLNLEQKQLE) are enriched in polar residues.

The protein belongs to the peptidase A22B family.

The protein resides in the cell membrane. The protein localises to the golgi apparatus membrane. It localises to the lysosome membrane. It is found in the endosome membrane. Its subcellular location is the membrane. Intramembrane-cleaving aspartic protease (I-CLiP) that cleaves type II membrane signal peptides in the hydrophobic plane of the membrane. This Gallus gallus (Chicken) protein is Signal peptide peptidase-like 2B.